Reading from the N-terminus, the 61-residue chain is Probable tautomerase SAV1363 (61 aa).

The Proton acceptor; via imino nitrogen role is filled by Pro-2.

The protein belongs to the 4-oxalocrotonate tautomerase family.

This chain is Probable tautomerase SAV1363, found in Staphylococcus aureus (strain Mu50 / ATCC 700699).